A 66-amino-acid polypeptide reads, in one-letter code: uncharacterized protein (66 aa).

A helical transmembrane segment spans residues 11–31 (PFPLLGVWIIVIIIVAVIGLL).

The protein localises to the membrane. This is an uncharacterized protein from Chenopodium amaranticolor (Quinoa).